Reading from the N-terminus, the 462-residue chain is MSNGIIVQVIGAVVDVQFPQDAVPKVYDALKIVSEGQSKGLVMEVQQQIGGGVVRCIAMGTSDGLRRGAEVSNTGEAIKVPVGMKTLGRIMNVLGEPVDEQGPIGAEDNWVIHREAPSYEDQSSATELLETGIKVIDLICPFAKGGKVGLFGGAGVGKTVNMMELINNIAKAHSGLSVFAGVGERTREGNDFYYEMKESNVLDKVAMVYGQMNEPPGNRLRVALTGLTMAEKFRDEGRDVLLFIDNIYRYTLAGTEVSALLGRMPSAVGYQPTLAEEMGVLQERITSTKTGSITSIQAVYVPADDLTDPSPATTFAHLDSTVTLSRQIAALGIYPAVDPLDSTSRQLDPLVVGQEHYETARGVQTVLQRYKELKDIIAILGMDELSEDDKLVVARARKIERFLSQPFNVAEVFTGSPGKYVTLKETIRGFKGILDGEYDDLPEQAFYMVGSIDEVVEKAKKL.

152 to 159 contributes to the ATP binding site; the sequence is GGAGVGKT.

It belongs to the ATPase alpha/beta chains family. F-type ATPases have 2 components, CF(1) - the catalytic core - and CF(0) - the membrane proton channel. CF(1) has five subunits: alpha(3), beta(3), gamma(1), delta(1), epsilon(1). CF(0) has three main subunits: a(1), b(2) and c(9-12). The alpha and beta chains form an alternating ring which encloses part of the gamma chain. CF(1) is attached to CF(0) by a central stalk formed by the gamma and epsilon chains, while a peripheral stalk is formed by the delta and b chains.

Its subcellular location is the cell inner membrane. The catalysed reaction is ATP + H2O + 4 H(+)(in) = ADP + phosphate + 5 H(+)(out). Its function is as follows. Produces ATP from ADP in the presence of a proton gradient across the membrane. The catalytic sites are hosted primarily by the beta subunits. In Tolumonas auensis (strain DSM 9187 / NBRC 110442 / TA 4), this protein is ATP synthase subunit beta.